The primary structure comprises 1589 residues: Polyhomeotic-proximal chromatin protein (1589 aa).

Positions Met1–Thr15 are enriched in basic and acidic residues. Disordered regions lie at residues Met1–Gln85, Lys107–Ser174, Leu252–Ile290, Leu1112–Thr1244, and Ala1260–Lys1294. Composition is skewed to low complexity over residues Asp18–Ser28, Asn60–Gln80, and Ala119–Thr139. A compositionally biased stretch (polar residues) spans His154–Ser174. Positions Asn260–Gly271 are enriched in gly residues. Residues Ala272–Gln285 show a composition bias toward low complexity. Position 1145 is a phosphoserine (Ser1145). Thr1148 is subject to Phosphothreonine. Low complexity predominate over residues Thr1157–Ala1180. The segment covering Arg1189 to Ser1221 has biased composition (polar residues). Low complexity-rich tracts occupy residues Thr1230–Thr1244 and Ala1260–Ser1290. The FCS-type zinc-finger motif lies at Ser1356–Arg1389. Zn(2+)-binding residues include Cys1365, Cys1368, Cys1383, and Cys1387. The SAM domain maps to Trp1513–Val1577.

As to quaternary structure, component of PRC1 complex, which contains many PcG proteins like Pc, ph, Scm, Psc, Sce and also chromatin-remodeling proteins such as histone deacetylases. This complex is distinct from the Esc/E(z) complex, at least composed of esc, E(z), Su(z)12, HDAC1/Rpd3 and Caf1-55. The 2 complexes however cooperate and interact together during the first 3 hours of development to establish PcG silencing. Interacts with the SAM domain of Scm via its SAM domain in vitro. Interacts with Trl in vivo and with corto in vitro. As to expression, salivary glands.

The protein localises to the nucleus. Its function is as follows. Polycomb group (PcG) protein. PcG proteins act by forming multiprotein complexes, which are required to maintain the transcriptionally repressive state of homeotic genes throughout development. PcG proteins are not required to initiate repression, but to maintain it during later stages of development. Component of the PcG multiprotein PRC1 complex, a complex that acts via chromatin remodeling and modification of histones; it mediates monoubiquitination of histone H2A 'Lys-118', rendering chromatin heritably changed in its expressibility. Plays a role in regulating the expression of other pair-rule genes such as eve, ftz, and H. In Drosophila melanogaster (Fruit fly), this protein is Polyhomeotic-proximal chromatin protein (ph-p).